The primary structure comprises 586 residues: Alpha-1,2-mannosyltransferase MNN5 (586 aa).

An N-terminal signal peptide occupies residues Met-1 to Asn-29. Asn-113, Asn-136, Asn-259, and Asn-264 each carry an N-linked (GlcNAc...) asparagine glycan.

It belongs to the MNN1/MNT family. Glycosylated.

The protein localises to the golgi apparatus. The protein resides in the cis-Golgi network. The protein operates within protein modification; protein glycosylation. Its function is as follows. Responsible for addition of first and second mannose residues to the outer chain of core N-linked polysaccharides and to O-linked mannotriose. Implicated in late Golgi modifications. This Saccharomyces cerevisiae (strain YJM789) (Baker's yeast) protein is Alpha-1,2-mannosyltransferase MNN5 (MNN5).